We begin with the raw amino-acid sequence, 476 residues long: UPF0481 protein At3g47200 (476 aa).

The segment at 1–24 is disordered; sequence MADKTDIISSSSDKASPPPPSAFR. Transmembrane regions (helical) follow at residues 133-153 and 439-459; these read LMFM…IMSG and AVLF…LSYL.

This sequence belongs to the UPF0481 family.

The protein resides in the membrane. The protein is UPF0481 protein At3g47200 of Arabidopsis thaliana (Mouse-ear cress).